The following is a 96-amino-acid chain: Small ribosomal subunit protein bS18 (96 aa).

The span at 1–22 (MYKDIDSHQRDSRTDGHQDGFK) shows a compositional bias: basic and acidic residues. The segment at 1–25 (MYKDIDSHQRDSRTDGHQDGFKKNP) is disordered.

This sequence belongs to the bacterial ribosomal protein bS18 family. In terms of assembly, part of the 30S ribosomal subunit. Forms a tight heterodimer with protein bS6.

Its function is as follows. Binds as a heterodimer with protein bS6 to the central domain of the 16S rRNA, where it helps stabilize the platform of the 30S subunit. The chain is Small ribosomal subunit protein bS18 from Borrelia duttonii (strain Ly).